We begin with the raw amino-acid sequence, 201 residues long: MSRYRGPRFKKIRRLGALPGLTSKRPTVGSELRNQSRSTKKSQYRIRLEEKQKLRFHYGLTERQLLKYVRIAGKAKGSTGQVLLQLLEMRLDNILFRLGMASTIPQARQLVNHRHVFVNGHIVDIPSYRCKPQDIITAKDNKKSKTLIQNSLESAPREELPTHLTLQPFQYKGLVNQIIDSKWVGLKINELLVVEYYSRQT.

The disordered stretch occupies residues 20–44; that stretch reads GLTSKRPTVGSELRNQSRSTKKSQY. The region spanning 89–150 is the S4 RNA-binding domain; it reads MRLDNILFRL…NKKSKTLIQN (62 aa).

This sequence belongs to the universal ribosomal protein uS4 family. In terms of assembly, part of the 30S ribosomal subunit. Contacts protein S5. The interaction surface between S4 and S5 is involved in control of translational fidelity.

It localises to the plastid. Its subcellular location is the chloroplast. One of the primary rRNA binding proteins, it binds directly to 16S rRNA where it nucleates assembly of the body of the 30S subunit. Its function is as follows. With S5 and S12 plays an important role in translational accuracy. The polypeptide is Small ribosomal subunit protein uS4c (rps4) (Lotus japonicus (Lotus corniculatus var. japonicus)).